Consider the following 234-residue polypeptide: MKLLVSPINREEAIIASLGGADIVDVKNPKEGSLGANFPWVIRDVKEVVNGRQPISATIGDFNYKPGTASLAALGAAVAGADYIKVGLYDIQTEAQALELLTKITLAVKDYDPSKKVVASGYSDYKRINSISPLLLPAVAAEAGVDVVMVDTGIKDGKSTFEFMDEQELKEFTDLAHEHGLENAIAGSLKFEDLPVLERIGPDIIGVRGMVCGGDRRTAIRQELVEKLVAECQI.

Lys-27 serves as the catalytic Schiff-base intermediate with substrate. Lys-85 acts as the Proton acceptor in catalysis.

It belongs to the MfnB family.

The enzyme catalyses 2 D-glyceraldehyde 3-phosphate = 4-(hydroxymethyl)-2-furancarboxaldehyde phosphate + phosphate + 2 H2O. It functions in the pathway cofactor biosynthesis; methanofuran biosynthesis. In terms of biological role, catalyzes the formation of 4-(hydroxymethyl)-2-furancarboxaldehyde phosphate (4-HFC-P) from two molecules of glyceraldehyde-3-P (GA-3-P). The polypeptide is (5-formylfuran-3-yl)methyl phosphate synthase (Methanosarcina acetivorans (strain ATCC 35395 / DSM 2834 / JCM 12185 / C2A)).